The chain runs to 339 residues: Phosphate acyltransferase (339 aa).

It belongs to the PlsX family. Homodimer. Probably interacts with PlsY.

It is found in the cytoplasm. It carries out the reaction a fatty acyl-[ACP] + phosphate = an acyl phosphate + holo-[ACP]. The protein operates within lipid metabolism; phospholipid metabolism. Catalyzes the reversible formation of acyl-phosphate (acyl-PO(4)) from acyl-[acyl-carrier-protein] (acyl-ACP). This enzyme utilizes acyl-ACP as fatty acyl donor, but not acyl-CoA. The protein is Phosphate acyltransferase of Clostridium perfringens (strain SM101 / Type A).